The primary structure comprises 319 residues: Ankyrin repeat domain-containing protein 1 (319 aa).

A disordered region spans residues 46 to 65 (KTLPANSVKQGEEQRKSEKL). The stretch at 53–89 (VKQGEEQRKSEKLREAELKKKKLEQRSKLENLEDLEI) forms a coiled coil. The segment covering 55–65 (QGEEQRKSEKL) has biased composition (basic and acidic residues). ANK repeat units follow at residues 152–181 (YKRTALHRACLEGHLAIVEKLMEAGAQIEF), 185–214 (LESTAIHWACRGGNADVLKLLLNKGAKISA), 218–247 (LLSTALHVAVRTGHYECAEHLIACEADLNA), 251–280 (EGDTPLHDAVRLNRYKMIRLLMTFGADLKV), and 284–315 (AGKTPMDLVLHWQSGTKAIFDSLKENAYKNSR).

In terms of assembly, interacts with TTN/titin and YBX1. As to expression, expressed in heart, cardiac muscle.

It is found in the nucleus. May play an important role in endothelial cell activation. May act as a nuclear transcription factor that negatively regulates the expression of cardiac genes. The sequence is that of Ankyrin repeat domain-containing protein 1 (Ankrd1) from Mus musculus (Mouse).